A 356-amino-acid polypeptide reads, in one-letter code: MVSFGSHTDFSVPHIQIRALNKTYASQGQHVHALKDIDLDIPEGKILGIIGKSGAGKSSLIRTLNGLEHPSSGSIKIYQNELTTLDHDHLIKLRQRIGMIFQHFNLMSAKTVWENVALPLKVSGYDKAEIKNRVDEVLSLVGLAHKADQYPAQLSGGQKQRVGIARALVHHPEILLCDEATSALDPESTSVILNLLKQINQELGITIVLITHEMQVIREICDQVVVIDHGEIVESGQVWSVFSNPVQPITQELLSLEQLELPFDLHREINANSTHSILRIKYQSEAHRSPDLNNILSSFDTPVYLYQSHIDTIQQHLIGNLIIGIPKLDLNINTLQQKLLPFIHHIEVIGYARPTH.

The ABC transporter domain maps to 15–254; the sequence is IQIRALNKTY…PVQPITQELL (240 aa). 51 to 58 is a binding site for ATP; the sequence is GKSGAGKS.

This sequence belongs to the ABC transporter superfamily. Methionine importer (TC 3.A.1.24) family. As to quaternary structure, the complex is composed of two ATP-binding proteins (MetN), two transmembrane proteins (MetI) and a solute-binding protein (MetQ).

The protein localises to the cell inner membrane. It carries out the reaction L-methionine(out) + ATP + H2O = L-methionine(in) + ADP + phosphate + H(+). The catalysed reaction is D-methionine(out) + ATP + H2O = D-methionine(in) + ADP + phosphate + H(+). In terms of biological role, part of the ABC transporter complex MetNIQ involved in methionine import. Responsible for energy coupling to the transport system. This chain is Methionine import ATP-binding protein MetN 1, found in Acinetobacter baylyi (strain ATCC 33305 / BD413 / ADP1).